The primary structure comprises 557 residues: Potassium-transporting ATPase potassium-binding subunit (557 aa).

10 helical membrane passes run 6-26, 59-79, 127-147, 172-192, 247-267, 278-298, 363-383, 410-430, 475-495, and 520-540; these read IQLLIFLFALLIFSPLFGLGL, ALSLLVFNFFGFLLLFLILFF, AGLTTQNFLSATTGLCVLLAL, LYVLLPLSFIFALFLVGFGVV, ISNFLQMFSILILPGACVFLY, WAIFSVMFTILCVGILIVWTF, IVFGGVGAGMYGMILFVLLTV, ILGILLPSTIILLFTAISVSV, VMIAIAMILGRFGVILPVLVI, and FYILLLSVIIIVGALTFFPVL.

The protein belongs to the KdpA family. As to quaternary structure, the system is composed of three essential subunits: KdpA, KdpB and KdpC.

It is found in the cell inner membrane. Functionally, part of the high-affinity ATP-driven potassium transport (or Kdp) system, which catalyzes the hydrolysis of ATP coupled with the electrogenic transport of potassium into the cytoplasm. This subunit binds the periplasmic potassium ions and delivers the ions to the membrane domain of KdpB through an intramembrane tunnel. The sequence is that of Potassium-transporting ATPase potassium-binding subunit from Leptospira interrogans serogroup Icterohaemorrhagiae serovar copenhageni (strain Fiocruz L1-130).